The sequence spans 579 residues: Insulin-like growth factor 2 mRNA-binding protein 3 (579 aa).

RRM domains are found at residues 2–75 (NKLY…HSVP) and 81–156 (RKLQ…YIPD). Residues 158–192 (TAAQQNPSPQLRGRRGPGQRGSSRQASPGSVSKQK) form a disordered region. At Ser165 the chain carries Phosphoserine. Ser184 carries the post-translational modification Phosphoserine; by MTOR. 3 KH domains span residues 195–260 (DLPL…CKSI), 276–343 (EIPL…EEEI), and 405–470 (TETV…QGRI). Glycyl lysine isopeptide (Lys-Gly) (interchain with G-Cter in SUMO2) cross-links involve residues Lys450 and Lys475. The KH 4 domain maps to 487–553 (KLEAHIRVPS…YACQVAQRKI (67 aa)). Thr528 is subject to Phosphothreonine.

This sequence belongs to the RRM IMP/VICKZ family. As to quaternary structure, can form homooligomers and heterooligomers with IGF2BP1 and IGF2BP3 in an RNA-dependent manner. Interacts with IGF2BP1. Interacts with ELAVL1, DHX9, HNRNPU, MATR3 and PABPC1. As to expression, expressed in oocytes, spermatogonia and spermatocytes (at protein level).

Its subcellular location is the nucleus. It localises to the cytoplasm. It is found in the P-body. The protein localises to the stress granule. Functionally, RNA-binding factor that may recruit target transcripts to cytoplasmic protein-RNA complexes (mRNPs). This transcript 'caging' into mRNPs allows mRNA transport and transient storage. It also modulates the rate and location at which target transcripts encounter the translational apparatus and shields them from endonuclease attacks or microRNA-mediated degradation. Preferentially binds to N6-methyladenosine (m6A)-containing mRNAs and increases their stability. Binds to the 3'-UTR of CD44 mRNA and stabilizes it, hence promotes cell adhesion and invadopodia formation. Binds to beta-actin/ACTB and MYC transcripts. Increases MYC mRNA stability by binding to the coding region instability determinant (CRD) and binding is enhanced by m6A-modification of the CRD. Binds to the 5'-UTR of the insulin-like growth factor 2 (IGF2) mRNAs. The polypeptide is Insulin-like growth factor 2 mRNA-binding protein 3 (Igf2bp3) (Mus musculus (Mouse)).